The primary structure comprises 198 residues: Nucleoid occlusion factor SlmA (198 aa).

Residues 10–70 (NRREEILQSL…SLIEFIEDSL (61 aa)) form the HTH tetR-type domain. The segment at residues 33–52 (TTAKLAASVGVSEAALYRHF) is a DNA-binding region (H-T-H motif). Residues 117–144 (EQDRLQGRINQLFERIEAQLRQVLREKR) are a coiled coil.

Belongs to the nucleoid occlusion factor SlmA family. As to quaternary structure, homodimer. Interacts with FtsZ.

The protein resides in the cytoplasm. Its subcellular location is the nucleoid. Functionally, required for nucleoid occlusion (NO) phenomenon, which prevents Z-ring formation and cell division over the nucleoid. Acts as a DNA-associated cell division inhibitor that binds simultaneously chromosomal DNA and FtsZ, and disrupts the assembly of FtsZ polymers. SlmA-DNA-binding sequences (SBS) are dispersed on non-Ter regions of the chromosome, preventing FtsZ polymerization at these regions. This Salmonella paratyphi A (strain ATCC 9150 / SARB42) protein is Nucleoid occlusion factor SlmA.